The following is a 96-amino-acid chain: Protein C4 (96 aa).

A lipid anchor (N-myristoyl glycine; by host) is attached at Gly2. A disordered region spans residues Ser66–Met96. Polar residues predominate over residues Gln77–Glu89.

Belongs to the geminiviridae protein AC4/C4 family.

The protein localises to the host cell membrane. Its function is as follows. Pathogenicity determinant. May act as a suppressor of RNA-mediated gene silencing, also known as post-transcriptional gene silencing (PTGS), a mechanism of plant viral defense that limits the accumulation of viral RNAs. The sequence is that of Protein C4 from Cynanchum acutum (Tomato).